The following is a 339-amino-acid chain: Fe-S cluster assembly protein DRE2 (339 aa).

The N-terminal SAM-like domain stretch occupies residues 1–157 (MTRILLLLHP…KKLSSTHAAV (157 aa)). The tract at residues 158–206 (GLTDTSASNTDEENDDVNSKRKLQETKLAYFSESDDEDEEDQIIDENNL) is linker. Residues cysteine 221, cysteine 233, cysteine 236, and cysteine 238 each contribute to the [2Fe-2S] cluster site. Residues 221–238 (CELPNGKKRRKACKDCTC) form a fe-S binding site A region. [4Fe-4S] cluster contacts are provided by cysteine 302, cysteine 305, cysteine 313, and cysteine 316. 2 short sequence motifs (cx2C motif) span residues 302–305 (CSSC) and 313–316 (CDGC). The interval 302 to 316 (CSSCSLGDAFRCDGC) is fe-S binding site B.

This sequence belongs to the anamorsin family. In terms of assembly, monomer. Interacts with TAH18. Interacts with MIA40. The cofactor is [2Fe-2S] cluster. Requires [4Fe-4S] cluster as cofactor.

The protein localises to the cytoplasm. The protein resides in the mitochondrion intermembrane space. Its function is as follows. Component of the cytosolic iron-sulfur (Fe-S) protein assembly (CIA) machinery required for the maturation of extramitochondrial Fe-S proteins. Part of an electron transfer chain functioning in an early step of cytosolic Fe-S biogenesis, facilitating the de novo assembly of a [4Fe-4S] cluster on the scaffold complex CFD1-NBP35. Electrons are transferred to DRE2 from NADPH via the FAD- and FMN-containing protein TAH18. TAH18-DRE2 are also required for the assembly of the diferric tyrosyl radical cofactor of ribonucleotide reductase (RNR), probably by providing electrons for reduction during radical cofactor maturation in the catalytic small subunit RNR2. This chain is Fe-S cluster assembly protein DRE2, found in Debaryomyces hansenii (strain ATCC 36239 / CBS 767 / BCRC 21394 / JCM 1990 / NBRC 0083 / IGC 2968) (Yeast).